Consider the following 341-residue polypeptide: S-adenosylmethionine:tRNA ribosyltransferase-isomerase (341 aa).

Belongs to the QueA family. Monomer.

It localises to the cytoplasm. The catalysed reaction is 7-aminomethyl-7-carbaguanosine(34) in tRNA + S-adenosyl-L-methionine = epoxyqueuosine(34) in tRNA + adenine + L-methionine + 2 H(+). It participates in tRNA modification; tRNA-queuosine biosynthesis. In terms of biological role, transfers and isomerizes the ribose moiety from AdoMet to the 7-aminomethyl group of 7-deazaguanine (preQ1-tRNA) to give epoxyqueuosine (oQ-tRNA). The protein is S-adenosylmethionine:tRNA ribosyltransferase-isomerase of Clostridium kluyveri (strain NBRC 12016).